The primary structure comprises 172 residues: Shikimate kinase (172 aa).

14–19 (GAGKTT) contributes to the ATP binding site. Position 18 (Thr-18) interacts with Mg(2+). Asp-36, Arg-60, and Gly-82 together coordinate substrate. Arg-119 lines the ATP pocket. Position 137 (Arg-137) interacts with substrate.

The protein belongs to the shikimate kinase family. As to quaternary structure, monomer. Requires Mg(2+) as cofactor.

Its subcellular location is the cytoplasm. It carries out the reaction shikimate + ATP = 3-phosphoshikimate + ADP + H(+). It participates in metabolic intermediate biosynthesis; chorismate biosynthesis; chorismate from D-erythrose 4-phosphate and phosphoenolpyruvate: step 5/7. Catalyzes the specific phosphorylation of the 3-hydroxyl group of shikimic acid using ATP as a cosubstrate. This Thermobifida fusca (strain YX) protein is Shikimate kinase.